Reading from the N-terminus, the 269-residue chain is Hydroxypyruvate/pyruvate aldolase (269 aa).

His-48 serves as the catalytic Proton acceptor. Residues Glu-152 and Asp-178 each contribute to the a divalent metal cation site.

The protein belongs to the HpcH/HpaI aldolase family. Requires a divalent metal cation as cofactor.

It catalyses the reaction D-glyceraldehyde + pyruvate = 2-dehydro-3-deoxy-L-galactonate. Its function is as follows. Aldolase which can catalyze in vitro the aldolisation reaction between hydroxypyruvate (HPA) or pyruvate (PA) and D-glyceraldehyde (D-GA). The condensation of pyruvate and D-glyceraldehyde produces 2-dehydro-3-deoxy-L-galactonate as the major product. Has weak activity with hydroxypyruvate and D-glyceraldehyde. The chain is Hydroxypyruvate/pyruvate aldolase from Delftia acidovorans (strain DSM 14801 / SPH-1).